The sequence spans 315 residues: Ribose-phosphate pyrophosphokinase (315 aa).

Residues 37 to 39 and 96 to 97 each bind ATP; these read DGE and RQ. Residues histidine 131 and aspartate 170 each coordinate Mg(2+). The active site involves lysine 194. D-ribose 5-phosphate-binding positions include arginine 196, aspartate 220, and 224 to 228; that span reads DTGGT.

Belongs to the ribose-phosphate pyrophosphokinase family. Class I subfamily. In terms of assembly, homohexamer. The cofactor is Mg(2+).

The protein localises to the cytoplasm. It catalyses the reaction D-ribose 5-phosphate + ATP = 5-phospho-alpha-D-ribose 1-diphosphate + AMP + H(+). It functions in the pathway metabolic intermediate biosynthesis; 5-phospho-alpha-D-ribose 1-diphosphate biosynthesis; 5-phospho-alpha-D-ribose 1-diphosphate from D-ribose 5-phosphate (route I): step 1/1. Its function is as follows. Involved in the biosynthesis of the central metabolite phospho-alpha-D-ribosyl-1-pyrophosphate (PRPP) via the transfer of pyrophosphoryl group from ATP to 1-hydroxyl of ribose-5-phosphate (Rib-5-P). The chain is Ribose-phosphate pyrophosphokinase from Salmonella typhi.